The primary structure comprises 135 residues: Ribosome-binding factor A (135 aa).

It belongs to the RbfA family. In terms of assembly, monomer. Binds 30S ribosomal subunits, but not 50S ribosomal subunits or 70S ribosomes.

It localises to the cytoplasm. One of several proteins that assist in the late maturation steps of the functional core of the 30S ribosomal subunit. Associates with free 30S ribosomal subunits (but not with 30S subunits that are part of 70S ribosomes or polysomes). Required for efficient processing of 16S rRNA. May interact with the 5'-terminal helix region of 16S rRNA. The protein is Ribosome-binding factor A of Rhodopseudomonas palustris (strain HaA2).